A 115-amino-acid chain; its full sequence is uncharacterized protein (115 aa).

This is an uncharacterized protein from Gallus gallus (Chicken).